The chain runs to 468 residues: Glutamate--tRNA ligase 2 (468 aa).

Positions 13-23 (PSPTGYLHIGG) match the 'HIGH' region motif. The 'KMSKS' region motif lies at 241–245 (KLSKR). Lys-244 contacts ATP.

It belongs to the class-I aminoacyl-tRNA synthetase family. Glutamate--tRNA ligase type 1 subfamily. In terms of assembly, monomer.

Its subcellular location is the cytoplasm. The enzyme catalyses tRNA(Glu) + L-glutamate + ATP = L-glutamyl-tRNA(Glu) + AMP + diphosphate. Catalyzes the attachment of glutamate to tRNA(Glu) in a two-step reaction: glutamate is first activated by ATP to form Glu-AMP and then transferred to the acceptor end of tRNA(Glu). The sequence is that of Glutamate--tRNA ligase 2 from Paracoccus denitrificans (strain Pd 1222).